The sequence spans 485 residues: Glutamyl-tRNA(Gln) amidotransferase subunit A (485 aa).

Active-site charge relay system residues include K79 and S154. Catalysis depends on S178, which acts as the Acyl-ester intermediate.

The protein belongs to the amidase family. GatA subfamily. As to quaternary structure, heterotrimer of A, B and C subunits.

The catalysed reaction is L-glutamyl-tRNA(Gln) + L-glutamine + ATP + H2O = L-glutaminyl-tRNA(Gln) + L-glutamate + ADP + phosphate + H(+). In terms of biological role, allows the formation of correctly charged Gln-tRNA(Gln) through the transamidation of misacylated Glu-tRNA(Gln) in organisms which lack glutaminyl-tRNA synthetase. The reaction takes place in the presence of glutamine and ATP through an activated gamma-phospho-Glu-tRNA(Gln). This Staphylococcus aureus protein is Glutamyl-tRNA(Gln) amidotransferase subunit A.